The following is a 384-amino-acid chain: dTDP-dihydrostreptose--streptidine-6-phosphate dihydrostreptosyltransferase (384 aa).

The enzyme catalyses dTDP-L-dihydrostreptose + streptidine 6-phosphate = O-(1-&gt;4)-alpha-L-dihydrostreptosyl-streptidine 6-phosphate + dTDP + H(+). Its pathway is antibiotic biosynthesis; streptomycin biosynthesis. Functionally, is probably a dihydrostreptosyl glycosyltransferase, involved in the first glycosylation step condensing streptidine-6-phosphate and dihydrostreptose. The chain is dTDP-dihydrostreptose--streptidine-6-phosphate dihydrostreptosyltransferase (strH) from Streptomyces griseus.